A 497-amino-acid chain; its full sequence is Cytochrome P450 76AD1 (497 aa).

A helical membrane pass occupies residues 4–24; it reads ATLAMILAIWFISFHFIKLLF. Cysteine 439 contributes to the heme binding site.

This sequence belongs to the cytochrome P450 family. Requires heme as cofactor.

Its subcellular location is the membrane. Its pathway is pigment biosynthesis; betalain biosynthesis. Its function is as follows. Converts L-DOPA to cyclo-DOPA in the betalain pathway. Provides the cyclo-DOPA moiety of all red betacyanins. This Beta vulgaris (Sugar beet) protein is Cytochrome P450 76AD1.